The chain runs to 583 residues: Isocitrate dehydrogenase kinase/phosphatase (583 aa).

ATP contacts are provided by residues 315-321 and Lys-336; that span reads APGIRGM. Asp-371 is a catalytic residue.

This sequence belongs to the AceK family.

Its subcellular location is the cytoplasm. The enzyme catalyses L-seryl-[isocitrate dehydrogenase] + ATP = O-phospho-L-seryl-[isocitrate dehydrogenase] + ADP + H(+). In terms of biological role, bifunctional enzyme which can phosphorylate or dephosphorylate isocitrate dehydrogenase (IDH) on a specific serine residue. This is a regulatory mechanism which enables bacteria to bypass the Krebs cycle via the glyoxylate shunt in response to the source of carbon. When bacteria are grown on glucose, IDH is fully active and unphosphorylated, but when grown on acetate or ethanol, the activity of IDH declines drastically concomitant with its phosphorylation. The protein is Isocitrate dehydrogenase kinase/phosphatase of Salmonella heidelberg (strain SL476).